A 400-amino-acid chain; its full sequence is Deoxyguanosinetriphosphate triphosphohydrolase-like protein (400 aa).

An HD domain is found at 73-215 (RLTHSIEVSQ…AAIADDIAYN (143 aa)).

Belongs to the dGTPase family. Type 2 subfamily.

The protein is Deoxyguanosinetriphosphate triphosphohydrolase-like protein of Bartonella quintana (strain Toulouse) (Rochalimaea quintana).